Reading from the N-terminus, the 87-residue chain is RNA-binding protein Hfq (87 aa).

In terms of domain architecture, Sm spans 9 to 68 (DPYLNVLRKERIPVSIYLVNGIKLQGQVESFDQFVVLLKNTVSQMVYKHAISTVVPSRPV).

This sequence belongs to the Hfq family. As to quaternary structure, homohexamer.

RNA chaperone that binds small regulatory RNA (sRNAs) and mRNAs to facilitate mRNA translational regulation in response to envelope stress, environmental stress and changes in metabolite concentrations. Also binds with high specificity to tRNAs. This chain is RNA-binding protein Hfq, found in Teredinibacter turnerae (strain ATCC 39867 / T7901).